The chain runs to 175 residues: Ribosome-binding factor A (175 aa).

Residues 129–175 (GAKPAGEADPYRDRGSADEPSDAGGLVIRTSDGLEAENTGDDYQAED) form a disordered region. The segment covering 162–175 (LEAENTGDDYQAED) has biased composition (acidic residues).

This sequence belongs to the RbfA family. As to quaternary structure, monomer. Binds 30S ribosomal subunits, but not 50S ribosomal subunits or 70S ribosomes.

Its subcellular location is the cytoplasm. Functionally, one of several proteins that assist in the late maturation steps of the functional core of the 30S ribosomal subunit. Associates with free 30S ribosomal subunits (but not with 30S subunits that are part of 70S ribosomes or polysomes). Required for efficient processing of 16S rRNA. May interact with the 5'-terminal helix region of 16S rRNA. The sequence is that of Ribosome-binding factor A from Mycobacterium marinum (strain ATCC BAA-535 / M).